A 22-amino-acid chain; its full sequence is Rothein 4.1 (22 aa).

Belongs to the frog skin active peptide (FSAP) family. Rothein subfamily. In terms of tissue distribution, expressed by the skin dorsal glands.

The protein localises to the secreted. Its function is as follows. Lacks antimicrobial activity. Does not inhibit the formation of NO by neuronal nitric oxide. The sequence is that of Rothein 4.1 from Litoria rothii (Roth's tree frog).